The sequence spans 545 residues: Chaperonin GroEL 1 (545 aa).

ATP is bound by residues 29–32, 86–90, Gly-413, 479–481, and Asp-495; these read TLGP, DGTTT, and DAA. A disordered region spans residues 525 to 545; it reads PEPKENNPAGSGAGMGGDFDY. Over residues 535–545 the composition is skewed to gly residues; the sequence is SGAGMGGDFDY.

The protein belongs to the chaperonin (HSP60) family. Forms a cylinder of 14 subunits composed of two heptameric rings stacked back-to-back. Interacts with the co-chaperonin GroES.

It localises to the cytoplasm. It catalyses the reaction ATP + H2O + a folded polypeptide = ADP + phosphate + an unfolded polypeptide.. Together with its co-chaperonin GroES, plays an essential role in assisting protein folding. The GroEL-GroES system forms a nano-cage that allows encapsulation of the non-native substrate proteins and provides a physical environment optimized to promote and accelerate protein folding. This Thermostichus vulcanus (Synechococcus vulcanus) protein is Chaperonin GroEL 1.